A 678-amino-acid polypeptide reads, in one-letter code: UvrABC system protein C (678 aa).

The span at 1–13 (MKKNISYGKHKTF) shows a compositional bias: basic residues. The interval 1-25 (MKKNISYGKHKTFPSKLNGLEKQHS) is disordered. One can recognise a GIY-YIG domain in the interval 69–147 (HKPGVYRMFD…IKRLHPRFNV (79 aa)). Positions 257-292 (QSVKNDMIQAMHKAAEDLDFEQAAVYRDRLSALSHI) constitute a UVR domain.

The protein belongs to the UvrC family. Interacts with UvrB in an incision complex.

The protein resides in the cytoplasm. Its function is as follows. The UvrABC repair system catalyzes the recognition and processing of DNA lesions. UvrC both incises the 5' and 3' sides of the lesion. The N-terminal half is responsible for the 3' incision and the C-terminal half is responsible for the 5' incision. The protein is UvrABC system protein C of Bartonella quintana (strain Toulouse) (Rochalimaea quintana).